Consider the following 564-residue polypeptide: NAC domain-containing protein 16 (564 aa).

Residues 16-166 (SAPGFRFHPT…YYALYKLYKK (151 aa)) form the NAC domain. The DNA-binding element occupies 115–172 (VGLKKTLVFYRGRAPNGERTDWVMHEYTMDEEELGRCKNAKEYYALYKLYKKSGAGPK). Residues 535–555 (FLLLSIMGALCAIFWVFKATV) form a helical membrane-spanning segment.

Expressed in roots, rosette leaves, shoot apex, stems and flowers.

The protein resides in the membrane. The protein localises to the nucleus. Its function is as follows. Transcriptional activator activated by proteolytic cleavage through regulated intramembrane proteolysis (RIP). Transcriptional activator that promotes leaf senescence by up-regulating senescence-associated genes in response to developmental and stress-induced senescence signals. Functions in salt and oxidative stress-responsive signaling pathways. Binds to the promoter of NAC029/NAP and NAC059/ORS1 genes. This is NAC domain-containing protein 16 from Arabidopsis thaliana (Mouse-ear cress).